Here is a 188-residue protein sequence, read N- to C-terminus: ADP-ribosylation factor K (188 aa).

Residues 34 to 40 (DGAGKST), 75 to 79 (DVGGQ), and 134 to 137 (NKQD) each bind GTP.

It belongs to the small GTPase superfamily. Arf family.

It localises to the golgi apparatus. GTP-binding protein that may be involved in protein trafficking. May modulate vesicle budding and uncoating within the Golgi apparatus. This Dictyostelium discoideum (Social amoeba) protein is ADP-ribosylation factor K (arrK).